The following is a 396-amino-acid chain: uncharacterized protein (396 aa).

11 helical membrane-spanning segments follow: residues 7 to 27 (SDDV…SIGL), 36 to 56 (AVSG…VGVL), 62 to 82 (VYDT…LFQI), 94 to 114 (LLFI…LAFF), 159 to 179 (VVAD…IPAL), 218 to 238 (IAFN…VSGY), 250 to 270 (GTLG…IFLF), 285 to 305 (TFLI…RLIV), 310 to 330 (LILL…LAAG), 340 to 360 (ILLA…MAIA), and 367 to 387 (VAPI…VGTF).

The protein resides in the cell membrane. This is an uncharacterized protein from Bacillus subtilis (strain 168).